Here is a 470-residue protein sequence, read N- to C-terminus: MHTVEDMLVEKNYSKCPLKKRPVNYQFEAPQNHSNTPNEPQDLCVKKMEILEENPSEELINVSDCCEDEGVDVDHTDDEHIEEEDEDVDVDVDSDPNQTQAAALAAAAAVAAAAAASVVVPTPTYPKYPWNNFHMSPYTAEFYRTINQQGHQILPLRGDLIAPSSPSDSLGSLSPPPHHYLHGRASSVSPPMRSEIIHRPIGVRQHRFLPYPQMPGYPSLGGYTHTHHHHAPISPAYSENSYYSMRSMTPESSCSSSLPEDLSLKHKNLNLNLNTSQPGEQAAAKTGDMSPETMPNASAKKDKNQPPRYQCPDCQKSYSTFSGLTKHQQFHCPAAEGNQVKKSFSCKDCDKTYVSLGALKMHIRTHTLPCKCNLCGKAFSRPWLLQGHIRTHTGEKPFSCQHCHRAFADRSNLRAHLQTHSDIKKYSCTSCSKTFSRMSLLTKHSEGGCPGGSAGSSSSSELNYAGYAEP.

Positions 271–309 (LNLNTSQPGEQAAAKTGDMSPETMPNASAKKDKNQPPRY) are disordered. C2H2-type zinc fingers lie at residues 309–331 (YQCPDCQKSYSTFSGLTKHQQFH), 344–366 (FSCKDCDKTYVSLGALKMHIRTH), 370–392 (CKCNLCGKAFSRPWLLQGHIRTH), and 398–420 (FSCQHCHRAFADRSNLRAHLQTH). The C2H2-type 5; atypical zinc finger occupies 426-449 (YSCTSCSKTFSRMSLLTKHSEGGC). A disordered region spans residues 448–470 (GCPGGSAGSSSSSELNYAGYAEP).

Belongs to the snail C2H2-type zinc-finger protein family. In terms of tissue distribution, expression is complex and dynamic. In early embryogenesis, expression begins on the dorsal side of the embryo. Expressed in a pattern of longitudinal stripes early in germband elongation. Later in embryogenesis, expression is in cells that correspond to the wing, haltere, leg and genital imaginal disks and the abdominal histoblasts. In the embryonic leg disk, expression is restricted to imaginal cells. Also expressed in the central nervous system (CNS), tracheae and head of stage 14 embryos. CNS and tracheal expression decays during later stages, though head expression persists until late in embryogenesis. In third instar larvae, expression is seen in the brain and in regions of many imaginal tissues including the eye-antennal, wing, leg and haltere disks. Expressed in embryonic, larval and adult male germline stem cells and in the somatic cells of the embryonic gonads.

It localises to the nucleus. Its function is as follows. Transcription factor that can both stimulate and repress transcription. Binds to the consensus DNA sequence 5'-A/GCAGGTG-3'. Regulates cell motility and adhesion during tracheal morphogenesis by stimulating transcription of the DE-cadherin gene shg at branch tips, thereby promoting tracheal tube fusion. Maintains diploidy in imaginal cells by inhibiting the transcription of genes required for endoreplication. Required for development of the genital disk and acts as an intrinsic determinant of wing cell fate. The somatic protein is required for maintenance of male germ cells. Acts with other members of the snail protein family to control embryonic central nervous system development. This chain is Protein escargot (esg), found in Drosophila melanogaster (Fruit fly).